Reading from the N-terminus, the 477-residue chain is Bifunctional protein HldE (477 aa).

The interval 1 to 318 is ribokinase; the sequence is MKVTLPEFER…ENAVRGRAET (318 aa). 195–198 provides a ligand contact to ATP; sequence NLSE. Residue aspartate 264 is part of the active site. The cytidylyltransferase stretch occupies residues 344 to 477; sequence MTNGVFDILH…IKKIQKDSDK (134 aa).

The protein in the N-terminal section; belongs to the carbohydrate kinase PfkB family. It in the C-terminal section; belongs to the cytidylyltransferase family. In terms of assembly, homodimer.

The enzyme catalyses D-glycero-beta-D-manno-heptose 7-phosphate + ATP = D-glycero-beta-D-manno-heptose 1,7-bisphosphate + ADP + H(+). It carries out the reaction D-glycero-beta-D-manno-heptose 1-phosphate + ATP + H(+) = ADP-D-glycero-beta-D-manno-heptose + diphosphate. Its pathway is nucleotide-sugar biosynthesis; ADP-L-glycero-beta-D-manno-heptose biosynthesis; ADP-L-glycero-beta-D-manno-heptose from D-glycero-beta-D-manno-heptose 7-phosphate: step 1/4. The protein operates within nucleotide-sugar biosynthesis; ADP-L-glycero-beta-D-manno-heptose biosynthesis; ADP-L-glycero-beta-D-manno-heptose from D-glycero-beta-D-manno-heptose 7-phosphate: step 3/4. Its function is as follows. Catalyzes the phosphorylation of D-glycero-D-manno-heptose 7-phosphate at the C-1 position to selectively form D-glycero-beta-D-manno-heptose-1,7-bisphosphate. Catalyzes the ADP transfer from ATP to D-glycero-beta-D-manno-heptose 1-phosphate, yielding ADP-D-glycero-beta-D-manno-heptose. The protein is Bifunctional protein HldE of Klebsiella pneumoniae subsp. pneumoniae (strain ATCC 700721 / MGH 78578).